The primary structure comprises 896 residues: MTEESEETVLYIEHRYVCSECNQLYGSLEEVLMHQNSHVPQQHFELVGVADPGVTVATDTASGTGLYQTLVQESQYQCLECGQLLMSPSQLLEHQELHLKMMTPQEAVPAEPPPKAPPLSSSTIHYECVDCKALFASQELWLNHRQTHLRATPTKAPAPVVLGSPVVPGPPVGQARVAVEHSYRKAEEGGEGATVPSAAATTTEVVTEVELLLYKCSECSQLFQLPADFLEHQATHFPAPVPESQEPALQQEVQASSPAEVPVSQPDPVPASDHSYELRNGEAIGRDRRGRRARRNNSGEAGGAATQELFCSACDQLFLSPHQLQQHLRSHREGVFKCPLCSRVFPSPSSLDQHLGDHSSESHFLCVDCGLAFGTEALLLAHRRAHTPNPLHSCPCGKTFVNLTKFLYHRRTHGVGGVPLPTTPVPPEEPVIGFPEPAPAETGEPEAPEPPVSEETSAGPAAPGTYRCLLCSREFGKALQLTRHQRFVHRLERRHKCSICGKMFKKKSHVRNHLRTHTGERPFPCPDCSKPFNSPANLARHRLTHTGERPYRCGDCGKAFTQSSTLRQHRLVHAQHFPYRCQECGVRFHRPYRLLMHRYHHTGEYPYKCRECPRSFLLRRLLEVHQLVVHAGRQPHRCPSCGAAFPSSLRLREHRCAAAAAQAPRRFECGTCGKKVGSAARLQAHEAAHAAAGPGEVLAKEPPAPRAPRATRAPVASPAGLGGTATASPAAPARRRGLECSECKKLFSTETSLQVHRRIHTGERPYPCPDCGKAFRQSTHLKDHRRLHTGERPFACEVCGKAFAISMRLAEHRRIHTGERPYSCPDCGKSYRSFSNLWKHRKTHQQQHQAAVRQQLAEAEAAVGLAVMETAVEALPLVEAIEIYPLAEAEGVQISG.

3 C2H2-type zinc fingers span residues 16-38, 76-98, and 126-148; these read YVCSECNQLYGSLEEVLMHQNSH, YQCLECGQLLMSPSQLLEHQELH, and YECVDCKALFASQELWLNHRQTH. At serine 164 the chain carries Phosphoserine. The C2H2-type 4 zinc finger occupies 214-236; that stretch reads YKCSECSQLFQLPADFLEHQATH. The disordered stretch occupies residues 239–301; that stretch reads APVPESQEPA…RARRNNSGEA (63 aa). Residues 247-257 show a composition bias toward polar residues; it reads PALQQEVQASS. Over residues 274 to 287 the composition is skewed to basic and acidic residues; that stretch reads HSYELRNGEAIGRD. Serine 298 carries the phosphoserine modification. 4 consecutive C2H2-type zinc fingers follow at residues 309-331, 336-358, 364-386, and 392-413; these read LFCSACDQLFLSPHQLQQHLRSH, FKCPLCSRVFPSPSSLDQHLGDH, FLCVDCGLAFGTEALLLAHRRAH, and HSCPCGKTFVNLTKFLYHRRTH. The segment at 434–460 is disordered; that stretch reads FPEPAPAETGEPEAPEPPVSEETSAGP. 6 C2H2-type zinc fingers span residues 466–489, 495–517, 523–545, 551–573, 579–601, and 607–630; these read YRCLLCSREFGKALQLTRHQRFVH, HKCSICGKMFKKKSHVRNHLRTH, FPCPDCSKPFNSPANLARHRLTH, YRCGDCGKAFTQSSTLRQHRLVH, YRCQECGVRFHRPYRLLMHRYHH, and YKCRECPRSFLLRRLLEVHQLVVH. The segment at 636-659 adopts a C2H2-type 15; degenerate zinc-finger fold; the sequence is HRCPSCGAAFPSSLRLREHRCAAA. The C2H2-type 16 zinc finger occupies 667 to 689; it reads FECGTCGKKVGSAARLQAHEAAH. The interval 687-733 is disordered; it reads AAHAAAGPGEVLAKEPPAPRAPRATRAPVASPAGLGGTATASPAAPA. Residues 707 to 732 show a composition bias toward low complexity; it reads APRATRAPVASPAGLGGTATASPAAP. Phosphoserine is present on serine 717. Residue threonine 724 is modified to Phosphothreonine. Serine 728 is subject to Phosphoserine. 4 C2H2-type zinc fingers span residues 738-760, 766-788, 794-816, and 822-844; these read LECSECKKLFSTETSLQVHRRIH, YPCPDCGKAFRQSTHLKDHRRLH, FACEVCGKAFAISMRLAEHRRIH, and YSCPDCGKSYRSFSNLWKHRKTH. Arginine 832 bears the Asymmetric dimethylarginine mark.

Belongs to the krueppel C2H2-type zinc-finger protein family.

The protein resides in the nucleus. In terms of biological role, may be involved in transcriptional regulation. The protein is Zinc finger protein 574 (ZNF574) of Macaca fascicularis (Crab-eating macaque).